The sequence spans 396 residues: Elongation factor Tu (396 aa).

The 196-residue stretch at 10-205 (KPHVNIGTIG…ACDDSIPDPE (196 aa)) folds into the tr-type G domain. The tract at residues 19–26 (GHVDHGKT) is G1. A GTP-binding site is contributed by 19–26 (GHVDHGKT). Residue Thr26 participates in Mg(2+) binding. The tract at residues 62–66 (GITIN) is G2. The G3 stretch occupies residues 83-86 (DAPG). GTP is bound by residues 83–87 (DAPGH) and 138–141 (NKCD). Residues 138-141 (NKCD) form a G4 region. Positions 175 to 177 (SAL) are G5.

This sequence belongs to the TRAFAC class translation factor GTPase superfamily. Classic translation factor GTPase family. EF-Tu/EF-1A subfamily. Monomer.

It is found in the cytoplasm. The catalysed reaction is GTP + H2O = GDP + phosphate + H(+). Its function is as follows. GTP hydrolase that promotes the GTP-dependent binding of aminoacyl-tRNA to the A-site of ribosomes during protein biosynthesis. The polypeptide is Elongation factor Tu (Corynebacterium diphtheriae (strain ATCC 700971 / NCTC 13129 / Biotype gravis)).